Reading from the N-terminus, the 504-residue chain is Cobyric acid synthase (504 aa).

The GATase cobBQ-type domain occupies 251-448; the sequence is DITIAIVQLP…LHGLFDSDAF (198 aa). Cysteine 332 acts as the Nucleophile in catalysis. The active site involves histidine 440.

The protein belongs to the CobB/CobQ family. CobQ subfamily.

It functions in the pathway cofactor biosynthesis; adenosylcobalamin biosynthesis. Its function is as follows. Catalyzes amidations at positions B, D, E, and G on adenosylcobyrinic A,C-diamide. NH(2) groups are provided by glutamine, and one molecule of ATP is hydrogenolyzed for each amidation. This Salmonella gallinarum (strain 287/91 / NCTC 13346) protein is Cobyric acid synthase.